The sequence spans 589 residues: ATP-dependent lipid A-core flippase (589 aa).

A run of 5 helical transmembrane segments spans residues 23 to 43, 60 to 80, 153 to 173, 249 to 269, and 272 to 292; these read WPIF…DAGF, LVFI…RGAA, VGLL…FLVI, VGTS…LFFA, and PSFH…IMML. In terms of domain architecture, ABC transmembrane type-1 spans 27–307; the sequence is LIGVVGMIAV…LTMVNSYIQK (281 aa). The ABC transporter domain maps to 339–575; the sequence is IEYQGVSFAY…NGAYAELYRM (237 aa). An ATP-binding site is contributed by 373-380; that stretch reads GRSGAGKS.

It belongs to the ABC transporter superfamily. Lipid exporter (TC 3.A.1.106) family. In terms of assembly, homodimer.

It is found in the cell inner membrane. The catalysed reaction is ATP + H2O + lipid A-core oligosaccharideSide 1 = ADP + phosphate + lipid A-core oligosaccharideSide 2.. Involved in lipopolysaccharide (LPS) biosynthesis. Translocates lipid A-core from the inner to the outer leaflet of the inner membrane. Transmembrane domains (TMD) form a pore in the inner membrane and the ATP-binding domain (NBD) is responsible for energy generation. This chain is ATP-dependent lipid A-core flippase, found in Coxiella burnetii (strain RSA 493 / Nine Mile phase I).